A 231-amino-acid chain; its full sequence is Large ribosomal subunit protein uL1 (231 aa).

The protein belongs to the universal ribosomal protein uL1 family. As to quaternary structure, part of the 50S ribosomal subunit.

Binds directly to 23S rRNA. The L1 stalk is quite mobile in the ribosome, and is involved in E site tRNA release. In terms of biological role, protein L1 is also a translational repressor protein, it controls the translation of the L11 operon by binding to its mRNA. In Clostridium kluyveri (strain NBRC 12016), this protein is Large ribosomal subunit protein uL1.